A 1004-amino-acid polypeptide reads, in one-letter code: Bifunctional glutamine synthetase adenylyltransferase/adenylyl-removing enzyme (1004 aa).

An adenylyl removase region spans residues 1 to 496 (MVRPPSARSA…LHAKLFYRPL (496 aa)). Residues 502 to 1004 (RMDPDALRLS…RAVVERVFGS (503 aa)) form an adenylyl transferase region.

This sequence belongs to the GlnE family. Mg(2+) is required as a cofactor.

It catalyses the reaction [glutamine synthetase]-O(4)-(5'-adenylyl)-L-tyrosine + phosphate = [glutamine synthetase]-L-tyrosine + ADP. The catalysed reaction is [glutamine synthetase]-L-tyrosine + ATP = [glutamine synthetase]-O(4)-(5'-adenylyl)-L-tyrosine + diphosphate. Functionally, involved in the regulation of glutamine synthetase GlnA, a key enzyme in the process to assimilate ammonia. When cellular nitrogen levels are high, the C-terminal adenylyl transferase (AT) inactivates GlnA by covalent transfer of an adenylyl group from ATP to specific tyrosine residue of GlnA, thus reducing its activity. Conversely, when nitrogen levels are low, the N-terminal adenylyl removase (AR) activates GlnA by removing the adenylyl group by phosphorolysis, increasing its activity. The regulatory region of GlnE binds the signal transduction protein PII (GlnB) which indicates the nitrogen status of the cell. This is Bifunctional glutamine synthetase adenylyltransferase/adenylyl-removing enzyme from Nocardia farcinica (strain IFM 10152).